A 136-amino-acid polypeptide reads, in one-letter code: uncharacterized protein (136 aa).

This is an uncharacterized protein from Bacillus anthracis.